The primary structure comprises 306 residues: UDP-N-acetylenolpyruvoylglucosamine reductase (306 aa).

The FAD-binding PCMH-type domain maps to 34-198; the sequence is VGGPADLLIT…LEVTFKLHNS (165 aa). R177 is an active-site residue. The active-site Proton donor is the S227. E297 is an active-site residue.

This sequence belongs to the MurB family. FAD is required as a cofactor.

It is found in the cytoplasm. It carries out the reaction UDP-N-acetyl-alpha-D-muramate + NADP(+) = UDP-N-acetyl-3-O-(1-carboxyvinyl)-alpha-D-glucosamine + NADPH + H(+). Its pathway is cell wall biogenesis; peptidoglycan biosynthesis. In terms of biological role, cell wall formation. The sequence is that of UDP-N-acetylenolpyruvoylglucosamine reductase from Clostridium botulinum (strain Langeland / NCTC 10281 / Type F).